Reading from the N-terminus, the 388-residue chain is Formate-dependent phosphoribosylglycinamide formyltransferase (388 aa).

Residues 15 to 16 (EL) and glutamate 75 contribute to the N(1)-(5-phospho-beta-D-ribosyl)glycinamide site. Residues arginine 107, lysine 148, 153–158 (SSGKGQ), 188–191 (EEFL), and glutamate 196 each bind ATP. The region spanning 112–302 (DLAAGELALR…EFELHLRAVL (191 aa)) is the ATP-grasp domain. Mg(2+) is bound by residues glutamate 261 and glutamate 273. N(1)-(5-phospho-beta-D-ribosyl)glycinamide is bound by residues aspartate 280, lysine 350, and 357 to 358 (RR).

This sequence belongs to the PurK/PurT family. As to quaternary structure, homodimer.

It catalyses the reaction N(1)-(5-phospho-beta-D-ribosyl)glycinamide + formate + ATP = N(2)-formyl-N(1)-(5-phospho-beta-D-ribosyl)glycinamide + ADP + phosphate + H(+). The protein operates within purine metabolism; IMP biosynthesis via de novo pathway; N(2)-formyl-N(1)-(5-phospho-D-ribosyl)glycinamide from N(1)-(5-phospho-D-ribosyl)glycinamide (formate route): step 1/1. In terms of biological role, involved in the de novo purine biosynthesis. Catalyzes the transfer of formate to 5-phospho-ribosyl-glycinamide (GAR), producing 5-phospho-ribosyl-N-formylglycinamide (FGAR). Formate is provided by PurU via hydrolysis of 10-formyl-tetrahydrofolate. The protein is Formate-dependent phosphoribosylglycinamide formyltransferase of Parasynechococcus marenigrum (strain WH8102).